The sequence spans 531 residues: MNEKQRLEQTGQIKTESHPADRKSALDRLKEKTTKDYEKYFTSVFLPPNLKEAKKRGKEEVKYVKDFSIPEEFRGMGRGRKFYIRTYGCQMNEHDTEVMAGIFMALGYEPTDRPEEANVILLNTCAIRENAENKVFGELGYLKPLKTTNPDLLLGVCGCMSQEESVVKKILKQYQYVDLIFGTHNIHRLPYILHEAYMSKEMVVEVWSKEGDVVENLPKVRKGKIKAWVNIMYGCDKFCTYCIVPYTRGKERSRRPEDIIQEVRQLAAQGYKEITLLGQNVNAYGKDFTDIQYGLGDLMDELRKIDIARIRFTTSHPRDFDDRLIEVLAKRGNLVEHIHLPVQSGSTEILKMMGRKYTREEYLELVRKIKAAIPDVALTTDIIVGFPNETDEQFEETLSLYREVEFDSAYTFIYSPREGTPAANMKDNVPMEVKKERLKRLNDLVQEIAAKKMKQYEGQVVEVLVEGESKTNPDVLAGYTRKNKLVHFVGPKSLIGQLVNVRITQAKTWTLTGELVNEAIEVNEHGKIYAG.

The tract at residues 1 to 26 (MNEKQRLEQTGQIKTESHPADRKSAL) is disordered. The span at 15 to 26 (TESHPADRKSAL) shows a compositional bias: basic and acidic residues. One can recognise an MTTase N-terminal domain in the interval 80–198 (RKFYIRTYGC…LPYILHEAYM (119 aa)). Residues cysteine 89, cysteine 125, cysteine 159, cysteine 235, cysteine 239, and cysteine 242 each contribute to the [4Fe-4S] cluster site. Residues 221 to 451 (RKGKIKAWVN…NDLVQEIAAK (231 aa)) form the Radical SAM core domain. Positions 454-517 (KQYEGQVVEV…TWTLTGELVN (64 aa)) constitute a TRAM domain.

This sequence belongs to the methylthiotransferase family. MiaB subfamily. Monomer. [4Fe-4S] cluster is required as a cofactor.

It localises to the cytoplasm. The enzyme catalyses N(6)-dimethylallyladenosine(37) in tRNA + (sulfur carrier)-SH + AH2 + 2 S-adenosyl-L-methionine = 2-methylsulfanyl-N(6)-dimethylallyladenosine(37) in tRNA + (sulfur carrier)-H + 5'-deoxyadenosine + L-methionine + A + S-adenosyl-L-homocysteine + 2 H(+). Catalyzes the methylthiolation of N6-(dimethylallyl)adenosine (i(6)A), leading to the formation of 2-methylthio-N6-(dimethylallyl)adenosine (ms(2)i(6)A) at position 37 in tRNAs that read codons beginning with uridine. The protein is tRNA-2-methylthio-N(6)-dimethylallyladenosine synthase of Geobacillus kaustophilus (strain HTA426).